The sequence spans 824 residues: Silver exporting P-type ATPase (824 aa).

A disordered region spans residues 89-112 (ASEHHHHHDHHEVSPDKIKQSHRQ). Basic and acidic residues predominate over residues 98 to 112 (HHEVSPDKIKQSHRQ). 6 helical membrane passes run 167 to 187 (FWLG…SHLF), 200 to 220 (TWLQ…PFFA), 234 to 254 (FTLV…ATVF), 268 to 288 (LVAI…LGQV), 427 to 447 (WFVP…SVWG), and 455 to 475 (GLIA…GLAT). The active-site 4-aspartylphosphate intermediate is the aspartate 511. The next 2 membrane-spanning stretches (helical) occupy residues 764–784 (IRQN…VAAG) and 785–805 (LLYP…AMAL).

This sequence belongs to the cation transport ATPase (P-type) (TC 3.A.3) family. Type IB subfamily.

It localises to the cell membrane. It carries out the reaction Ag(+)(in) + ATP + H2O = Ag(+)(out) + ADP + phosphate + H(+). In terms of biological role, component of the sil cation-efflux system that confers resistance to silver. This is Silver exporting P-type ATPase (silP) from Salmonella typhimurium.